We begin with the raw amino-acid sequence, 310 residues long: Probable metallo-hydrolase Mb2322c (310 aa).

The tract at residues 1-29 (MVATRGRPCPTNFSRPQRPRVAGNGTKSQ) is disordered. Residues His-137, Asp-139, Asp-141, His-142, His-221, Asp-242, and His-288 each contribute to the Zn(2+) site.

Belongs to the metallo-beta-lactamase superfamily. Requires Zn(2+) as cofactor.

The sequence is that of Probable metallo-hydrolase Mb2322c from Mycobacterium bovis (strain ATCC BAA-935 / AF2122/97).